The sequence spans 94 residues: Small ribosomal subunit protein uS19 (94 aa).

The interval 73–94 is disordered; sequence EFAPTRTYRGHGKDAERTTRRR. Basic and acidic residues predominate over residues 83–94; it reads HGKDAERTTRRR.

The protein belongs to the universal ribosomal protein uS19 family.

Functionally, protein S19 forms a complex with S13 that binds strongly to the 16S ribosomal RNA. The polypeptide is Small ribosomal subunit protein uS19 (Thermomicrobium roseum (strain ATCC 27502 / DSM 5159 / P-2)).